The following is a 301-amino-acid chain: Sulfate adenylyltransferase subunit 2 2 (301 aa).

This sequence belongs to the PAPS reductase family. CysD subfamily. In terms of assembly, heterodimer composed of CysD, the smaller subunit, and CysN.

It catalyses the reaction sulfate + ATP + H(+) = adenosine 5'-phosphosulfate + diphosphate. Its pathway is sulfur metabolism; hydrogen sulfide biosynthesis; sulfite from sulfate: step 1/3. Functionally, with CysN forms the ATP sulfurylase (ATPS) that catalyzes the adenylation of sulfate producing adenosine 5'-phosphosulfate (APS) and diphosphate, the first enzymatic step in sulfur assimilation pathway. APS synthesis involves the formation of a high-energy phosphoric-sulfuric acid anhydride bond driven by GTP hydrolysis by CysN coupled to ATP hydrolysis by CysD. The protein is Sulfate adenylyltransferase subunit 2 2 of Shewanella sediminis (strain HAW-EB3).